The chain runs to 1219 residues: Polyamine-transporting ATPase 13A3 (1219 aa).

Topologically, residues 1-28 (MDKEERKTINKGQEDEMEIHGYNLCRWK) are cytoplasmic. An intramembrane segment occupies 29–49 (LAMVFVGVICTGGFLLLLLYW). Over 50–201 (LPEWRVKATC…IAVKVPSVFK (152 aa)) the chain is Cytoplasmic. A helical transmembrane segment spans residues 202–222 (LLIKEVLNPFYIFQLFSVILW). Topologically, residues 223 to 228 (SVDEYY) are lumenal. Residues 229–249 (YYALAIVIMSVVSIISSLYSI) form a helical membrane-spanning segment. Topologically, residues 250–405 (RKQYVMLHDM…KPTDFKLYRD (156 aa)) are cytoplasmic. The helical transmembrane segment at 406–426 (AYLFLLCLVVVAGIGFIYTII) threads the bilayer. Topologically, residues 427-444 (NSILNEKEVQEIIIKSLD) are lumenal. A helical transmembrane segment spans residues 445–465 (IITITVPPALPAAMTAGIVYA). Residues 466–936 (QRRLKKVGIF…ALMTSFCVFK (471 aa)) lie on the Cytoplasmic side of the membrane. Asp-494 functions as the 4-aspartylphosphate intermediate in the catalytic mechanism. 2 residues coordinate Mg(2+): Asp-494 and Thr-496. ATP is bound by residues 494–496 (DKT), Phe-624, Arg-680, and Asp-746. Ser-813 carries the post-translational modification Phosphoserine. Asp-879 and Asp-883 together coordinate Mg(2+). 879–883 (DGAND) is an ATP binding site. Residues 937–957 (FMALYSIIQYFSVTLLYSILS) form a helical membrane-spanning segment. Residue Asn-958 is a topological domain, lumenal. The helical transmembrane segment at 959–979 (LGDFQFLFIDLAIILVVVFTM) threads the bilayer. The Cytoplasmic portion of the chain corresponds to 980–995 (SLNPAWKELVAQRPPS). A helical transmembrane segment spans residues 996-1016 (GLISGALLFSVLSQIVISVGF). Residues 1017 to 1066 (QSLGFFWVKQYKVCDPNSDVCNTTRSACWNSSHLYNGTELDSCKIQNYEN) are Lumenal-facing. The helical transmembrane segment at 1067-1087 (TTVFFISSFQYLTVAVAFSKG) threads the bilayer. The Cytoplasmic portion of the chain corresponds to 1088–1098 (KPFRQPCYKNY). Residues 1099-1119 (FFVISVIILYVFILFIMLHPV) traverse the membrane as a helical segment. At 1120 to 1136 (ASVDQVLEIMCVPYQWR) the chain is on the lumenal side. A helical transmembrane segment spans residues 1137–1157 (IYMLIIVLINAFVSITVEESV). At 1158–1219 (DRWGKCCLSW…NGSCQIITIA (62 aa)) the chain is on the cytoplasmic side.

This sequence belongs to the cation transport ATPase (P-type) (TC 3.A.3) family. Type V subfamily. As to expression, expression is greatest in liver, followed by kidney, colon, stomach, brain and small intestine. Isoform 1 is highly expressed in the kidney while isoform 2 is highly expressed in the brain.

It localises to the recycling endosome membrane. The protein resides in the early endosome membrane. It is found in the late endosome membrane. It catalyses the reaction putrescine(out) + ATP + H2O = putrescine(in) + ADP + phosphate + H(+). Its function is as follows. ATP-driven pump involved in endocytosis-dependent polyamine transport. Uses ATP as an energy source to transfer polyamine precursor putrescine from the endosomal compartment to the cytosol. This is Polyamine-transporting ATPase 13A3 from Mus musculus (Mouse).